A 450-amino-acid chain; its full sequence is Divalent metal cation transporter MntH (450 aa).

Transmembrane regions (helical) follow at residues Leu34 to Ile54, Ala61 to Leu81, Ile108 to Val128, Ile141 to Met161, Ala170 to Ser190, Gly212 to Leu232, Ile263 to Phe283, Pro305 to Ala325, Ser361 to Ile381, Gln383 to Leu403, and Val422 to Val442.

The protein belongs to the NRAMP family.

The protein localises to the cell membrane. Its function is as follows. H(+)-stimulated, divalent metal cation uptake system. This is Divalent metal cation transporter MntH from Staphylococcus aureus (strain JH1).